A 332-amino-acid polypeptide reads, in one-letter code: MRLAIDAMGGDHAPKEVVLGAMDAVKELDVEITLYGDENQISPHLTNNKNITIVHTEEVITSNDEPVRAVRRKKNASLVLMANAVKEKQADACISAGNTGALMSAGLFVVGRIPGIDRPALSPTLPTVDGKGFLMLDVGANVDAKPDHLLQYAIMGSIYSEKVRKIQQPRVGLLNVGTEDGKGNDLTKKAFELLQSAPINFVGNVEARDILNGVADVVVTDGFSGNVALKTIEGTAETIFSLLKGTLMSSTKTKLAAALVKKDLGGLKDKLDYSEYGGAGLFGLAAPVIKAHGSSNARAIYNAIKQAKHMVEFEVTPTITATVESIGKVEEE.

Belongs to the PlsX family. In terms of assembly, homodimer. Probably interacts with PlsY.

The protein resides in the cytoplasm. The enzyme catalyses a fatty acyl-[ACP] + phosphate = an acyl phosphate + holo-[ACP]. Its pathway is lipid metabolism; phospholipid metabolism. Functionally, catalyzes the reversible formation of acyl-phosphate (acyl-PO(4)) from acyl-[acyl-carrier-protein] (acyl-ACP). This enzyme utilizes acyl-ACP as fatty acyl donor, but not acyl-CoA. In Oceanobacillus iheyensis (strain DSM 14371 / CIP 107618 / JCM 11309 / KCTC 3954 / HTE831), this protein is Phosphate acyltransferase.